Consider the following 718-residue polypeptide: Peroxisomal bifunctional enzyme (718 aa).

Positions 1-280 (MAEYLRLPHS…FAEKSANKWS (280 aa)) are enoyl-CoA hydratase / isomerase. Lys38 carries the N6-succinyllysine modification. Gly99 is a substrate binding site. N6-acetyllysine; alternate occurs at positions 163 and 172. Lys163 and Lys172 each carry N6-succinyllysine; alternate. The residue at position 181 (Lys181) is an N6-succinyllysine. N6-acetyllysine; alternate occurs at positions 189 and 217. 2 positions are modified to N6-succinyllysine; alternate: Lys189 and Lys217. Residue Lys240 is modified to N6-succinyllysine. Lys248 carries the N6-acetyllysine modification. Lys252 carries the N6-succinyllysine modification. Lys274 is modified (N6-acetyllysine; alternate). Lys274 carries the N6-succinyllysine; alternate modification. Residues Lys278, Lys288, and Lys329 each carry the N6-succinyllysine modification. The segment at 281–567 (TPSGASWKTA…DMLCEAGRFG (287 aa)) is 3-hydroxyacyl-CoA dehydrogenase. N6-acetyllysine occurs at positions 344, 348, 355, and 459. Position 527 is an N6-succinyllysine (Lys527). A Phosphothreonine modification is found at Thr543. Lys572 carries the post-translational modification N6-succinyllysine. An N6-acetyllysine; alternate mark is found at Lys579, Lys586, and Lys705. Residues Lys579, Lys586, and Lys705 each carry the N6-succinyllysine; alternate modification. The Microbody targeting signal motif lies at 716–718 (SKL). Position 717 is an N6-succinyllysine (Lys717).

This sequence in the N-terminal section; belongs to the enoyl-CoA hydratase/isomerase family. In the C-terminal section; belongs to the 3-hydroxyacyl-CoA dehydrogenase family. Monomer. In terms of processing, acetylated, leading to enhanced enzyme activity. Acetylation is enhanced by up to 80% after treatment either with trichostin A (TCA) or with nicotinamide (NAM) with highest increase on Lys-344. Acetylation and enzyme activity increased by about 1.5% on addition of fatty acids.

Its subcellular location is the peroxisome. It catalyses the reaction a (3S)-3-hydroxyacyl-CoA = a (2E)-enoyl-CoA + H2O. The enzyme catalyses a 4-saturated-(3S)-3-hydroxyacyl-CoA = a (3E)-enoyl-CoA + H2O. It carries out the reaction a (3Z)-enoyl-CoA = a 4-saturated (2E)-enoyl-CoA. The catalysed reaction is a (3E)-enoyl-CoA = a 4-saturated (2E)-enoyl-CoA. It catalyses the reaction a (3S)-3-hydroxyacyl-CoA + NAD(+) = a 3-oxoacyl-CoA + NADH + H(+). The enzyme catalyses (2S,3S)-3-hydroxy-2-methylbutanoyl-CoA = (2E)-2-methylbut-2-enoyl-CoA + H2O. It carries out the reaction (2E)-dodecenedioyl-CoA + H2O = (3S)-hydroxydodecanedioyl-CoA. The catalysed reaction is (3S)-hydroxydodecanedioyl-CoA + NAD(+) = 3-oxododecanedioyl-CoA + NADH + H(+). It catalyses the reaction (2E)-octenedioyl-CoA + H2O = (3S)-hydroxyoctanedioyl-CoA. The enzyme catalyses (3S)-hydroxyoctanedioyl-CoA + NAD(+) = 3-oxooctanedioyl-CoA + NADH + H(+). It carries out the reaction (2E)-decenedioyl-CoA + H2O = (3S)-hydroxydecanedioyl-CoA. The catalysed reaction is (3S)-hydroxydecanedioyl-CoA + NAD(+) = 3-oxodecanedioyl-CoA + NADH + H(+). It catalyses the reaction (2E)-tetradecenedioyl-CoA + H2O = (3S)-hydroxytetradecanedioyl-CoA. The enzyme catalyses (3S)-hydroxytetradecanedioyl-CoA + NAD(+) = 3-oxotetradecanedioyl-CoA + NADH + H(+). It carries out the reaction (3E,5Z)-tetradecadienoyl-CoA = (2E,5Z)-tetradecadienoyl-CoA. The catalysed reaction is (3E,5Z)-octadienoyl-CoA = (2E,5Z)-octadienoyl-CoA. It catalyses the reaction (3S)-hydroxydecanoyl-CoA + NAD(+) = 3-oxodecanoyl-CoA + NADH + H(+). The enzyme catalyses (3E)-decenoyl-CoA = (2E)-decenoyl-CoA. It carries out the reaction (3Z)-hexenoyl-CoA = (2E)-hexenoyl-CoA. The catalysed reaction is (3E)-hexenoyl-CoA = (2E)-hexenoyl-CoA. It catalyses the reaction (3S)-hydroxydecanoyl-CoA = (2E)-decenoyl-CoA + H2O. The enzyme catalyses (3S)-hydroxyhexanoyl-CoA = (2E)-hexenoyl-CoA + H2O. It carries out the reaction (3S)-hydroxyhexadecanoyl-CoA + NAD(+) = 3-oxohexadecanoyl-CoA + NADH + H(+). The catalysed reaction is (3S)-hydroxyhexadecanoyl-CoA = (2E)-hexadecenoyl-CoA + H2O. It catalyses the reaction (2E)-hexadecenedioyl-CoA + H2O = (3S)-hydroxyhexadecanedioyl-CoA. The enzyme catalyses (3S)-hydroxyhexadecanedioyl-CoA + NAD(+) = 3-oxohexadecanedioyl-CoA + NADH + H(+). The protein operates within lipid metabolism; fatty acid beta-oxidation. Its activity is regulated as follows. Enzyme activity enhanced by acetylation. Peroxisomal trifunctional enzyme possessing 2-enoyl-CoA hydratase, 3-hydroxyacyl-CoA dehydrogenase, and delta 3, delta 2-enoyl-CoA isomerase activities. Catalyzes two of the four reactions of the long chain fatty acids peroxisomal beta-oxidation pathway. Can also use branched-chain fatty acids such as 2-methyl-2E-butenoyl-CoA as a substrate, which is hydrated into (2S,3S)-3-hydroxy-2-methylbutanoyl-CoA. Optimal isomerase for 2,5 double bonds into 3,5 form isomerization in a range of enoyl-CoA species. Also able to isomerize both 3-cis and 3-trans double bonds into the 2-trans form in a range of enoyl-CoA species. With HSD17B4, catalyzes the hydration of trans-2-enoyl-CoA and the dehydrogenation of 3-hydroxyacyl-CoA, but with opposite chiral specificity. Regulates the amount of medium-chain dicarboxylic fatty acids which are essential regulators of all fatty acid oxidation pathways. Also involved in the degradation of long-chain dicarboxylic acids through peroxisomal beta-oxidation. In Mus musculus (Mouse), this protein is Peroxisomal bifunctional enzyme.